The following is a 195-amino-acid chain: Putative Tricorn-like protease N-terminal subunit (195 aa).

Belongs to the peptidase S41B family.

Its subcellular location is the cytoplasm. Degrades oligopeptides in a sequential manner. This is Putative Tricorn-like protease N-terminal subunit (triN) from Sulfurisphaera tokodaii (strain DSM 16993 / JCM 10545 / NBRC 100140 / 7) (Sulfolobus tokodaii).